A 367-amino-acid polypeptide reads, in one-letter code: Protein RecA (367 aa).

Residue 73-80 participates in ATP binding; it reads GPESSGKT. Positions 345–367 are disordered; it reads DEPVAKKASAKESKEAKELKEVE.

Belongs to the RecA family.

The protein localises to the cytoplasm. Its function is as follows. Can catalyze the hydrolysis of ATP in the presence of single-stranded DNA, the ATP-dependent uptake of single-stranded DNA by duplex DNA, and the ATP-dependent hybridization of homologous single-stranded DNAs. It interacts with LexA causing its activation and leading to its autocatalytic cleavage. The sequence is that of Protein RecA from Herminiimonas arsenicoxydans.